We begin with the raw amino-acid sequence, 169 residues long: Cell division inhibitor SulA (169 aa).

Residues 106–112 (ALRTGNY) are ftsZ binding. The segment at 162-169 (KIHSNLYH) is lon protease binding.

The protein belongs to the SulA family. As to quaternary structure, interacts with FtsZ. Post-translationally, is rapidly cleaved and degraded by the Lon protease once DNA damage is repaired.

Component of the SOS system and an inhibitor of cell division. Accumulation of SulA causes rapid cessation of cell division and the appearance of long, non-septate filaments. In the presence of GTP, binds a polymerization-competent form of FtsZ in a 1:1 ratio, thus inhibiting FtsZ polymerization and therefore preventing it from participating in the assembly of the Z ring. This mechanism prevents the premature segregation of damaged DNA to daughter cells during cell division. The chain is Cell division inhibitor SulA from Shigella boydii serotype 18 (strain CDC 3083-94 / BS512).